A 158-amino-acid polypeptide reads, in one-letter code: Transcriptional regulator MraZ (158 aa).

SpoVT-AbrB domains lie at 5 to 52 and 91 to 134; these read IYET…TFSS and AVEC…SQAE.

Belongs to the MraZ family. As to quaternary structure, forms oligomers.

It localises to the cytoplasm. The protein localises to the nucleoid. The protein is Transcriptional regulator MraZ of Geobacter sulfurreducens (strain ATCC 51573 / DSM 12127 / PCA).